The chain runs to 215 residues: MTFNIIKLENWDRKEYFEHYFNQQTTYSITKEIDITLFKDMSKKKGYEIYPSLIYAIMEVVNKNKVFRTGINSENKLGYWDKLNPLYTVFNKQTEKFTNIWTESDNNFTSFYNNYKNDLLEYKDKEEMFPKKPIPENTLPISMIPWIDFSSFNLNIGNNSNFLLPIITIGKFYSENNKIYIPVALQLHHAVCDGYHASLFINEFQDIIKKVDDWI.

The active-site Proton acceptor is the His-189.

Belongs to the chloramphenicol acetyltransferase family. In terms of assembly, homotrimer.

It carries out the reaction chloramphenicol + acetyl-CoA = chloramphenicol 3-acetate + CoA. In terms of biological role, this enzyme is an effector of chloramphenicol resistance in bacteria. This is Chloramphenicol acetyltransferase (cat) from Staphylococcus aureus.